Reading from the N-terminus, the 1185-residue chain is Calmodulin-binding transcription activator homolog 1 (1185 aa).

Positions 72–200 (AVELFPCFKD…YLNVKTNNKI (129 aa)) form a DNA-binding region, CG-1. 2 disordered regions span residues 252-277 (GVNLPTSPLPQEPSSSTSRELERRNS) and 390-411 (KIRSGSQESPMGPPSSSSVTST). Low complexity predominate over residues 393–411 (SGSQESPMGPPSSSSVTST). The IPT/TIG domain maps to 418-498 (EMTPSSSSLK…ISTASEFTYE (81 aa)). An ANK repeat occupies 616–646 (DGSTPLHTACKNSASRIARLIISIDSSAIDV). Residues 957-984 (EAAMVIQRAYRVYRARSTTRRQEDIERR) form the IQ domain. A disordered region spans residues 1121–1185 (CPQTSGDQRN…KPPYGCGTLA (65 aa)). The span at 1128–1147 (QRNKRDSDGERKRDAHHDAP) shows a compositional bias: basic and acidic residues.

This sequence belongs to the CAMTA family. As to quaternary structure, may interact with calmodulin. In terms of tissue distribution, expressed broadly in the nervous system.

The protein resides in the nucleus. In terms of biological role, transcription factor. Positively modulates neuronal levels of the ubiquitous Ca2+ sensor calmodulin/cmd-1, probably by direct binding to the cmd-1 promoter, thereby regulating Ca2+ signaling, physiology, and behavior. The chain is Calmodulin-binding transcription activator homolog 1 from Caenorhabditis elegans.